A 267-amino-acid polypeptide reads, in one-letter code: MHRIAVPAATGAPTAQEPVKVAARNLDFYYDKYHALKSINIEIPEKRVTALIGPSGCGKSTLLRIFNRIYALYPKMEARGEVLLDNENILSPKYPMNRLRSKVGMVFQKPVPFPMTIFENVAYGIRHHEKLSKADMQNRVEQALRQGALWDEVKDKLGQSALGLSGGQQQRLCIARAVALRPDVLLLDEPTSALDPISTSRIEQLVEELKRDYTIVIVTHNMQQAARVSDYTAFMYLGDLIEHDRTETIFSQPSKQQTEDYITGRFG.

An ABC transporter domain is found at 21–262 (VAARNLDFYY…PSKQQTEDYI (242 aa)). ATP is bound at residue 53–60 (GPSGCGKS).

This sequence belongs to the ABC transporter superfamily. Phosphate importer (TC 3.A.1.7) family. As to quaternary structure, the complex is composed of two ATP-binding proteins (PstB), two transmembrane proteins (PstC and PstA) and a solute-binding protein (PstS).

The protein localises to the cell inner membrane. The enzyme catalyses phosphate(out) + ATP + H2O = ADP + 2 phosphate(in) + H(+). Part of the ABC transporter complex PstSACB involved in phosphate import. Responsible for energy coupling to the transport system. The chain is Phosphate import ATP-binding protein PstB from Xanthomonas euvesicatoria pv. vesicatoria (strain 85-10) (Xanthomonas campestris pv. vesicatoria).